Reading from the N-terminus, the 364-residue chain is Aminomethyltransferase (364 aa).

This sequence belongs to the GcvT family. As to quaternary structure, the glycine cleavage system is composed of four proteins: P, T, L and H.

It catalyses the reaction N(6)-[(R)-S(8)-aminomethyldihydrolipoyl]-L-lysyl-[protein] + (6S)-5,6,7,8-tetrahydrofolate = N(6)-[(R)-dihydrolipoyl]-L-lysyl-[protein] + (6R)-5,10-methylene-5,6,7,8-tetrahydrofolate + NH4(+). In terms of biological role, the glycine cleavage system catalyzes the degradation of glycine. This chain is Aminomethyltransferase, found in Shewanella sp. (strain ANA-3).